The following is a 320-amino-acid chain: UDP-N-acetylenolpyruvoylglucosamine reductase (320 aa).

The 182-residue stretch at 35–216 (RAGGPAQVLF…KQAMDEVQHH (182 aa)) folds into the FAD-binding PCMH-type domain. The active site involves R181. The active-site Proton donor is the S230. E300 is a catalytic residue.

This sequence belongs to the MurB family. FAD is required as a cofactor.

It is found in the cytoplasm. It catalyses the reaction UDP-N-acetyl-alpha-D-muramate + NADP(+) = UDP-N-acetyl-3-O-(1-carboxyvinyl)-alpha-D-glucosamine + NADPH + H(+). Its pathway is cell wall biogenesis; peptidoglycan biosynthesis. Functionally, cell wall formation. The polypeptide is UDP-N-acetylenolpyruvoylglucosamine reductase (Brucella anthropi (strain ATCC 49188 / DSM 6882 / CCUG 24695 / JCM 21032 / LMG 3331 / NBRC 15819 / NCTC 12168 / Alc 37) (Ochrobactrum anthropi)).